We begin with the raw amino-acid sequence, 265 residues long: Tryptophan synthase alpha chain (265 aa).

Residues Glu-49 and Asp-60 each act as proton acceptor in the active site.

It belongs to the TrpA family. Tetramer of two alpha and two beta chains.

It catalyses the reaction (1S,2R)-1-C-(indol-3-yl)glycerol 3-phosphate + L-serine = D-glyceraldehyde 3-phosphate + L-tryptophan + H2O. The protein operates within amino-acid biosynthesis; L-tryptophan biosynthesis; L-tryptophan from chorismate: step 5/5. In terms of biological role, the alpha subunit is responsible for the aldol cleavage of indoleglycerol phosphate to indole and glyceraldehyde 3-phosphate. The chain is Tryptophan synthase alpha chain from Desulfatibacillum aliphaticivorans.